Consider the following 943-residue polypeptide: Isoleucine--tRNA ligase (943 aa).

The short motif at Pro58 to His68 is the 'HIGH' region element. L-isoleucyl-5'-AMP is bound at residue Glu567. Residues Lys608–Ser612 carry the 'KMSKS' region motif. Lys611 provides a ligand contact to ATP. 4 residues coordinate Zn(2+): Cys906, Cys909, Cys926, and Cys929.

This sequence belongs to the class-I aminoacyl-tRNA synthetase family. IleS type 1 subfamily. Monomer. Requires Zn(2+) as cofactor.

The protein localises to the cytoplasm. The catalysed reaction is tRNA(Ile) + L-isoleucine + ATP = L-isoleucyl-tRNA(Ile) + AMP + diphosphate. Its function is as follows. Catalyzes the attachment of isoleucine to tRNA(Ile). As IleRS can inadvertently accommodate and process structurally similar amino acids such as valine, to avoid such errors it has two additional distinct tRNA(Ile)-dependent editing activities. One activity is designated as 'pretransfer' editing and involves the hydrolysis of activated Val-AMP. The other activity is designated 'posttransfer' editing and involves deacylation of mischarged Val-tRNA(Ile). This Pseudomonas fluorescens (strain ATCC BAA-477 / NRRL B-23932 / Pf-5) protein is Isoleucine--tRNA ligase.